The following is a 395-amino-acid chain: Elongation factor Tu (395 aa).

Positions 10 to 204 constitute a tr-type G domain; sequence KPHVNIGTIG…VVDEYIPTPV (195 aa). Positions 19–26 are G1; that stretch reads GHVDHGKT. 19–26 lines the GTP pocket; it reads GHVDHGKT. A Mg(2+)-binding site is contributed by T26. The interval 60 to 64 is G2; that stretch reads GITIN. Residues 81–84 are G3; it reads DAPG. GTP-binding positions include 81–85 and 136–139; these read DAPGH and NKTD. A G4 region spans residues 136–139; the sequence is NKTD. Positions 174-176 are G5; that stretch reads SAL.

Belongs to the TRAFAC class translation factor GTPase superfamily. Classic translation factor GTPase family. EF-Tu/EF-1A subfamily. As to quaternary structure, monomer.

The protein resides in the cytoplasm. The enzyme catalyses GTP + H2O = GDP + phosphate + H(+). Its function is as follows. GTP hydrolase that promotes the GTP-dependent binding of aminoacyl-tRNA to the A-site of ribosomes during protein biosynthesis. The chain is Elongation factor Tu from Lactiplantibacillus plantarum (strain ATCC BAA-793 / NCIMB 8826 / WCFS1) (Lactobacillus plantarum).